The sequence spans 67 residues: uncharacterized protein (67 aa).

This is an uncharacterized protein from Swinepox virus (strain Kasza) (SWPV).